The chain runs to 212 residues: MILDDESQILGIDEAGRGSVIGPLVIGGVLMKKKKIRFLNRIGVKDSKQLNMKKRTIISRKIKKIAQFKTIIIPAHTIDEKRNNDINLNEIETEGMEEIIKIMKPNACYIDCIDVRENRFHDKIQKINPNMTVVTEHKADETYKIVSAASIIAKVERDKQLEIIRQEYGSVGSGYPSDKNTINYLKTIKNNQFPPIIRKTWKTIENITKSTE.

One can recognise an RNase H type-2 domain in the interval 7 to 212 (SQILGIDEAG…TIENITKSTE (206 aa)). A divalent metal cation contacts are provided by Asp13, Glu14, and Asp111.

This sequence belongs to the RNase HII family. Requires Mn(2+) as cofactor. Mg(2+) is required as a cofactor.

The protein resides in the cytoplasm. It carries out the reaction Endonucleolytic cleavage to 5'-phosphomonoester.. In terms of biological role, endonuclease that specifically degrades the RNA of RNA-DNA hybrids. In Methanosphaera stadtmanae (strain ATCC 43021 / DSM 3091 / JCM 11832 / MCB-3), this protein is Ribonuclease HII.